Reading from the N-terminus, the 363-residue chain is NADH-quinone oxidoreductase subunit H (363 aa).

Transmembrane regions (helical) follow at residues 29-49 (VLKILMIAIPLIVSVAFYVVW), 62-82 (GPMYVGMGLFQAFADVFKLLF), 94-114 (VIFVIAPLLTLAPSFAAWAVV), 127-147 (VGLLYLLAMTSLGVYGIILAG), 166-186 (VVSYEIAMGFALVGVMIAAGS), 202-222 (FFDWFLIPLFPLFIVYWVSGV), 239-257 (IVAGHMVEYSGSVFALFFL), 264-286 (ILVSFLISIFFLGGWLSPIQGWV), 293-313 (LIDWVWNGGWPWLLLKVLFFA), and 339-359 (FIPLTIVWIAVTALMVFSGVI).

It belongs to the complex I subunit 1 family. As to quaternary structure, NDH-1 is composed of 14 different subunits. Subunits NuoA, H, J, K, L, M, N constitute the membrane sector of the complex.

It localises to the cell inner membrane. The enzyme catalyses a quinone + NADH + 5 H(+)(in) = a quinol + NAD(+) + 4 H(+)(out). NDH-1 shuttles electrons from NADH, via FMN and iron-sulfur (Fe-S) centers, to quinones in the respiratory chain. The immediate electron acceptor for the enzyme in this species is believed to be ubiquinone. Couples the redox reaction to proton translocation (for every two electrons transferred, four hydrogen ions are translocated across the cytoplasmic membrane), and thus conserves the redox energy in a proton gradient. This subunit may bind ubiquinone. This Xylella fastidiosa (strain M12) protein is NADH-quinone oxidoreductase subunit H.